The primary structure comprises 316 residues: Phosphate acyltransferase (316 aa).

It belongs to the PlsX family. As to quaternary structure, homodimer. Probably interacts with PlsY.

The protein resides in the cytoplasm. The enzyme catalyses a fatty acyl-[ACP] + phosphate = an acyl phosphate + holo-[ACP]. The protein operates within lipid metabolism; phospholipid metabolism. In terms of biological role, catalyzes the reversible formation of acyl-phosphate (acyl-PO(4)) from acyl-[acyl-carrier-protein] (acyl-ACP). This enzyme utilizes acyl-ACP as fatty acyl donor, but not acyl-CoA. This Chlamydia felis (strain Fe/C-56) (Chlamydophila felis) protein is Phosphate acyltransferase.